We begin with the raw amino-acid sequence, 2715 residues long: Cilia- and flagella-associated protein 46 (2715 aa).

TPR repeat units follow at residues 89–122 (CRAQ…AKGE), 175–208 (AELM…IKSH), 261–295 (GDIS…LLFE), 324–359 (PGKL…AQLD), 426–459 (CQVH…DSLG), 469–503 (STRL…TPKD), 807–845 (SRKF…TNGS), 936–969 (LQTL…GIKY), 1111–1144 (AALY…LPRT), and 1174–1211 (AESE…LQKP). Residues 1356 to 1412 (SHLLLPKKEKENERSKEKEKERSKEKENERSKEKDKEKGKEEKVKEPKQSQSPAPIK) form a disordered region. The segment covering 1361–1403 (PKKEKENERSKEKEKERSKEKENERSKEKDKEKGKEEKVKEPK) has biased composition (basic and acidic residues). Residues 1362-1401 (KKEKENERSKEKEKERSKEKENERSKEKDKEKGKEEKVKE) are a coiled coil. Residues 1639–1672 (AQCLLLLAQLANKEKNYGQAKKMIAQAQHLGGSE) form a TPR 11 repeat. A coiled-coil region spans residues 1781–1810 (VDVKLERAKIKRLRAQNEKDEEQKTAYYLE). 3 disordered regions span residues 2000-2023 (EEEG…EHCR), 2294-2319 (AVVA…HSTV), and 2371-2399 (ETEG…KGSI). 2 stretches are compositionally biased toward basic and acidic residues: residues 2300–2311 (GKSKGKDKERKT) and 2371–2383 (ETEG…GRSR). Residues 2384 to 2398 (DPKKRSLAKKGRKGS) show a composition bias toward basic residues. 2 TPR repeats span residues 2399–2432 (IPRT…EMLT) and 2504–2537 (VAVL…EANW). Residues 2541–2567 (ASPSEDEWRRGGEPRRGFSDLEGQAAA) form a disordered region. Residues 2546-2559 (DEWRRGGEPRRGFS) are compositionally biased toward basic and acidic residues.

The protein belongs to the CFAP46 family.

It localises to the cytoplasm. It is found in the cytoskeleton. The protein localises to the cilium axoneme. Its function is as follows. As part of the central apparatus of the cilium axoneme plays a role in cilium movement. The sequence is that of Cilia- and flagella-associated protein 46 from Homo sapiens (Human).